A 218-amino-acid chain; its full sequence is Thiamine-phosphate synthase (218 aa).

Residues 43-47 and Asn-75 contribute to the 4-amino-2-methyl-5-(diphosphooxymethyl)pyrimidine site; that span reads QLRMK. Positions 76 and 95 each coordinate Mg(2+). Thr-114 is a 4-amino-2-methyl-5-(diphosphooxymethyl)pyrimidine binding site. 140–142 contacts 2-[(2R,5Z)-2-carboxy-4-methylthiazol-5(2H)-ylidene]ethyl phosphate; it reads TST. Lys-143 contacts 4-amino-2-methyl-5-(diphosphooxymethyl)pyrimidine. 2-[(2R,5Z)-2-carboxy-4-methylthiazol-5(2H)-ylidene]ethyl phosphate contacts are provided by residues Gly-171 and 191–192; that span reads VS.

The protein belongs to the thiamine-phosphate synthase family. Mg(2+) is required as a cofactor.

It carries out the reaction 2-[(2R,5Z)-2-carboxy-4-methylthiazol-5(2H)-ylidene]ethyl phosphate + 4-amino-2-methyl-5-(diphosphooxymethyl)pyrimidine + 2 H(+) = thiamine phosphate + CO2 + diphosphate. The enzyme catalyses 2-(2-carboxy-4-methylthiazol-5-yl)ethyl phosphate + 4-amino-2-methyl-5-(diphosphooxymethyl)pyrimidine + 2 H(+) = thiamine phosphate + CO2 + diphosphate. The catalysed reaction is 4-methyl-5-(2-phosphooxyethyl)-thiazole + 4-amino-2-methyl-5-(diphosphooxymethyl)pyrimidine + H(+) = thiamine phosphate + diphosphate. The protein operates within cofactor biosynthesis; thiamine diphosphate biosynthesis; thiamine phosphate from 4-amino-2-methyl-5-diphosphomethylpyrimidine and 4-methyl-5-(2-phosphoethyl)-thiazole: step 1/1. Its function is as follows. Condenses 4-methyl-5-(beta-hydroxyethyl)thiazole monophosphate (THZ-P) and 2-methyl-4-amino-5-hydroxymethyl pyrimidine pyrophosphate (HMP-PP) to form thiamine monophosphate (TMP). The protein is Thiamine-phosphate synthase of Myxococcus xanthus (strain DK1622).